The chain runs to 256 residues: Ubiquinone/menaquinone biosynthesis C-methyltransferase UbiE (256 aa).

S-adenosyl-L-methionine is bound by residues T79, D100, and 128–129 (DA).

The protein belongs to the class I-like SAM-binding methyltransferase superfamily. MenG/UbiE family.

The enzyme catalyses a 2-demethylmenaquinol + S-adenosyl-L-methionine = a menaquinol + S-adenosyl-L-homocysteine + H(+). The catalysed reaction is a 2-methoxy-6-(all-trans-polyprenyl)benzene-1,4-diol + S-adenosyl-L-methionine = a 5-methoxy-2-methyl-3-(all-trans-polyprenyl)benzene-1,4-diol + S-adenosyl-L-homocysteine + H(+). It participates in quinol/quinone metabolism; menaquinone biosynthesis; menaquinol from 1,4-dihydroxy-2-naphthoate: step 2/2. The protein operates within cofactor biosynthesis; ubiquinone biosynthesis. Methyltransferase required for the conversion of demethylmenaquinol (DMKH2) to menaquinol (MKH2) and the conversion of 2-polyprenyl-6-methoxy-1,4-benzoquinol (DDMQH2) to 2-polyprenyl-3-methyl-6-methoxy-1,4-benzoquinol (DMQH2). The protein is Ubiquinone/menaquinone biosynthesis C-methyltransferase UbiE of Stutzerimonas stutzeri (strain A1501) (Pseudomonas stutzeri).